We begin with the raw amino-acid sequence, 69 residues long: Large ribosomal subunit protein bL28 (69 aa).

The protein belongs to the bacterial ribosomal protein bL28 family.

The chain is Large ribosomal subunit protein bL28 from Lawsonia intracellularis (strain PHE/MN1-00).